Here is a 212-residue protein sequence, read N- to C-terminus: MTQVIEEAVKKVLEESKPRNFTQSIDVVITINDLDINKPENRLDEEVLLPNGRGKDVKIAFIAEGELAYQAEQAGADLVINKEKLEELGKNRPEAKKLANSYDFFVAQTDLMPTVGRFLGPVLGPRKKMPKPIPASANPETILGRLRSTIKIRVKDQPIIQSIVGSEDMTEAQVAENIDAIMDVLDRNLEKGSKQIKAMYLKTTMGPVTRVI.

The protein belongs to the universal ribosomal protein uL1 family. Part of the 50S ribosomal subunit.

Functionally, binds directly to 23S rRNA. Probably involved in E site tRNA release. Its function is as follows. Protein L1 is also a translational repressor protein, it controls the translation of its operon by binding to its mRNA. The sequence is that of Large ribosomal subunit protein uL1 from Methanosphaera stadtmanae (strain ATCC 43021 / DSM 3091 / JCM 11832 / MCB-3).